A 623-amino-acid polypeptide reads, in one-letter code: Riboflavin biosynthesis protein PYRR, chloroplastic (623 aa).

Residues 1 to 45 (MPLPQPLLGGASPAPARAASSFLHPLLHTRHRVSTAPAAASSFVP) constitute a chloroplast transit peptide. The 130-residue stretch at 52-181 (ANDAMLLRRA…ALRNEGIQVD (130 aa)) folds into the CMP/dCMP-type deaminase domain.

The protein in the C-terminal section; belongs to the YbiA family.

It localises to the plastid. The protein localises to the chloroplast. It catalyses the reaction 5-amino-6-(5-phospho-D-ribitylamino)uracil + NADP(+) = 5-amino-6-(5-phospho-D-ribosylamino)uracil + NADPH + H(+). It carries out the reaction 2,5-diamino-6-hydroxy-4-(5-phosphoribosylamino)-pyrimidine + H2O = 2,5,6-triamino-4-hydroxypyrimidine + D-ribose 5-phosphate. The enzyme catalyses 5-amino-6-(5-phospho-D-ribosylamino)uracil + H2O = 5,6-diaminouracil + D-ribose 5-phosphate. The protein operates within cofactor biosynthesis; riboflavin biosynthesis; 5-amino-6-(D-ribitylamino)uracil from GTP: step 3/4. Its function is as follows. Pyrimidine reductase involved in the riboflavin biosynthesis pathway. Also has a non-functional N-terminal deaminase domain that lacks the catalytically essential zinc-binding residues. 39% activity when NADH replaces NADPH. No evidence for a phosphatase activity conferred by the N-terminal domain. Catalyzes the hydrolysis of the N-glycosidic bond in the first two intermediates of riboflavin biosynthesis, which are highly reactive metabolites, yielding relatively innocuous products. Thus, can divert a surplus of harmful intermediates into relatively harmless products and pre-empt the damage these intermediates would otherwise do. Has no activity against GTP, nucleoside monophosphates or ADP-ribose. In Zea mays (Maize), this protein is Riboflavin biosynthesis protein PYRR, chloroplastic (PYRR).